The chain runs to 37 residues: Cytochrome b6-f complex subunit 5 (37 aa).

Residues Ser-5–Ala-25 form a helical membrane-spanning segment.

It belongs to the PetG family. The 4 large subunits of the cytochrome b6-f complex are cytochrome b6, subunit IV (17 kDa polypeptide, PetD), cytochrome f and the Rieske protein, while the 4 small subunits are PetG, PetL, PetM and PetN. The complex functions as a dimer.

It is found in the plastid. Its subcellular location is the chloroplast thylakoid membrane. Component of the cytochrome b6-f complex, which mediates electron transfer between photosystem II (PSII) and photosystem I (PSI), cyclic electron flow around PSI, and state transitions. PetG is required for either the stability or assembly of the cytochrome b6-f complex. This is Cytochrome b6-f complex subunit 5 from Arabis hirsuta (Hairy rock-cress).